Consider the following 131-residue polypeptide: uncharacterized protein (131 aa).

A CCHC-type; degenerate zinc finger spans residues Val64–Gly81.

This is an uncharacterized protein from Homo sapiens (Human).